The primary structure comprises 504 residues: L-carnitine/gamma-butyrobetaine antiporter (504 aa).

The next 12 membrane-spanning stretches (helical) occupy residues 10–30 (MEPK…WLTV), 51–71 (WGWA…WLVF), 92–112 (IFMM…SIEI), 143–163 (GPLP…FFFV), 195–215 (FYLV…TPLV), 231–251 (LDAI…ACGL), 263–283 (SYLS…SFIM), 316–336 (WSVF…IFLA), 347–367 (LCFG…TVLG), 398–418 (WAAL…CFIA), 446–466 (LLVR…LLAL), and 475–495 (AIIA…LSFI).

The protein belongs to the BCCT transporter (TC 2.A.15) family. CaiT subfamily. Homotrimer.

Its subcellular location is the cell inner membrane. The enzyme catalyses 4-(trimethylamino)butanoate(in) + (R)-carnitine(out) = 4-(trimethylamino)butanoate(out) + (R)-carnitine(in). It participates in amine and polyamine metabolism; carnitine metabolism. Catalyzes the exchange of L-carnitine for gamma-butyrobetaine. The sequence is that of L-carnitine/gamma-butyrobetaine antiporter from Shigella dysenteriae serotype 1 (strain Sd197).